The following is a 340-amino-acid chain: MLEQTTFNAPDGAPYQLITLQNENGMRVQFMDWGATWLSCKVPVNDTLREVLLGCKVDNYPTHQSYLGASVGRYANRIANAQFELNGELIKLSSNQGKHQLHGGEGFDKRRWNIQECGENFVCFSLHSVDGDQGFPGNVDVSVTYTLTGDNSVKIEYAGMCDKDTALNLTNHTYFNLENAEQGSDVREHTLRLNADFYLPVDNEGIPNSPLKHVVNTSFDFRIAKPIKQDFLQGDQQATKGYDHSFIVNKAWQKPCVLLTSPTGDLSLEVRTSQAALQVYTGNYLAGTPTRNGELYADFSGIALETQCLPDTPNHPEWQNYGGIQKAGGRYYQWTEFKFK.

Arg77 provides a ligand contact to substrate. The Proton donor role is filled by His172. Asp243 lines the substrate pocket. The active-site Proton acceptor is Glu305.

The protein belongs to the aldose epimerase family.

It is found in the cytoplasm. The catalysed reaction is alpha-D-glucose = beta-D-glucose. It participates in carbohydrate metabolism; hexose metabolism. In terms of biological role, mutarotase converts alpha-aldose to the beta-anomer. It is active on D-glucose, L-arabinose, D-xylose, D-galactose, maltose and lactose. This chain is Aldose 1-epimerase (galM), found in Haemophilus influenzae (strain ATCC 51907 / DSM 11121 / KW20 / Rd).